Reading from the N-terminus, the 405-residue chain is 3-isopropylmalate dehydrogenase (405 aa).

An NAD(+)-binding site is contributed by Gly-86–Glu-104. Substrate is bound by residues Arg-111, Arg-121, Arg-148, and Asp-237. 3 residues coordinate Mg(2+): Asp-237, Asp-262, and Asp-266. Residue Gly-301–Asn-312 coordinates NAD(+). Residues Ala-352–Ser-371 are disordered.

Belongs to the isocitrate and isopropylmalate dehydrogenases family. Homodimer. Requires Mg(2+) as cofactor. Mn(2+) serves as cofactor.

It is found in the cytoplasm. It carries out the reaction (2R,3S)-3-isopropylmalate + NAD(+) = 4-methyl-2-oxopentanoate + CO2 + NADH. Its pathway is amino-acid biosynthesis; L-leucine biosynthesis; L-leucine from 3-methyl-2-oxobutanoate: step 3/4. Its function is as follows. Catalyzes the oxidation of 3-carboxy-2-hydroxy-4-methylpentanoate (3-isopropylmalate) to 3-carboxy-4-methyl-2-oxopentanoate. The product decarboxylates to 4-methyl-2 oxopentanoate. The protein is 3-isopropylmalate dehydrogenase (LEU2) of Yarrowia lipolytica (strain CLIB 122 / E 150) (Yeast).